The primary structure comprises 603 residues: DNA mismatch repair protein MutL (603 aa).

Belongs to the DNA mismatch repair MutL/HexB family.

Its function is as follows. This protein is involved in the repair of mismatches in DNA. It is required for dam-dependent methyl-directed DNA mismatch repair. May act as a 'molecular matchmaker', a protein that promotes the formation of a stable complex between two or more DNA-binding proteins in an ATP-dependent manner without itself being part of a final effector complex. The polypeptide is DNA mismatch repair protein MutL (Nitrobacter winogradskyi (strain ATCC 25391 / DSM 10237 / CIP 104748 / NCIMB 11846 / Nb-255)).